We begin with the raw amino-acid sequence, 400 residues long: Putative cytochrome P450 133B2 (400 aa).

Cys348 contributes to the heme binding site.

The protein belongs to the cytochrome P450 family. It depends on heme as a cofactor.

In Xylella fastidiosa (strain 9a5c), this protein is Putative cytochrome P450 133B2 (cyp133B2).